The sequence spans 78 residues: Sec-independent protein translocase protein TatA (78 aa).

The chain crosses the membrane as a helical span at residues Met1–Gly21. Positions Glu47–Ser59 are enriched in basic and acidic residues. Residues Glu47 to Ala78 are disordered. Residues Leu60–Thr69 are compositionally biased toward polar residues.

This sequence belongs to the TatA/E family. In terms of assembly, the Tat system comprises two distinct complexes: a TatABC complex, containing multiple copies of TatA, TatB and TatC subunits, and a separate TatA complex, containing only TatA subunits. Substrates initially bind to the TatABC complex, which probably triggers association of the separate TatA complex to form the active translocon.

Its subcellular location is the cell inner membrane. Functionally, part of the twin-arginine translocation (Tat) system that transports large folded proteins containing a characteristic twin-arginine motif in their signal peptide across membranes. TatA could form the protein-conducting channel of the Tat system. This is Sec-independent protein translocase protein TatA from Vibrio vulnificus (strain CMCP6).